We begin with the raw amino-acid sequence, 320 residues long: Cytochrome f (320 aa).

The N-terminal stretch at 1–35 is a signal peptide; that stretch reads MRNINTYDWMKKWMTRSISILVMIHMITRTSISNA. Heme-binding residues include Tyr-36, Cys-56, Cys-59, and His-60. A helical transmembrane segment spans residues 286-306; it reads VQGLLLLLASVILAQIFLVLK.

Belongs to the cytochrome f family. As to quaternary structure, the 4 large subunits of the cytochrome b6-f complex are cytochrome b6, subunit IV (17 kDa polypeptide, petD), cytochrome f and the Rieske protein, while the 4 small subunits are PetG, PetL, PetM and PetN. The complex functions as a dimer. Heme serves as cofactor.

Its subcellular location is the plastid. It is found in the chloroplast thylakoid membrane. Functionally, component of the cytochrome b6-f complex, which mediates electron transfer between photosystem II (PSII) and photosystem I (PSI), cyclic electron flow around PSI, and state transitions. In Cycas taitungensis (Prince sago), this protein is Cytochrome f.